Consider the following 440-residue polypeptide: Phosphoglycerate kinase, glycosomal (440 aa).

Residues Val-23, Asp-24, Phe-25, Asn-26, Arg-39, Ser-61, His-62, Gly-64, Arg-65, Arg-135, His-171, and Arg-172 each coordinate (2R)-3-phosphoglycerate. Gly-217 is a CDP binding site. Ala-218 lines the ADP pocket. Positions 218 and 219 each coordinate AMP. Ala-218 is a binding site for ATP. Residue Ala-218 coordinates Mg(2+). Lys-219 contributes to the (2R)-3-phosphoglycerate binding site. Asp-222 serves as a coordination point for CDP. A Mg(2+)-binding site is contributed by Asp-222. ADP-binding residues include Lys-223 and Gly-241. An AMP-binding site is contributed by Lys-223. Gly-241 is a binding site for CDP. AMP contacts are provided by Ala-242 and Ala-314. ATP-binding residues include Ala-242 and Ala-314. Positions 314 and 338 each coordinate ADP. Gly-339 and Phe-344 together coordinate CDP. The ADP site is built by Phe-344, Glu-345, Asp-377, and Ser-378. Glu-345 is an AMP binding site. Residues Asp-377 and Ser-378 each contribute to the ATP site. Residue Asp-377 coordinates Mg(2+).

This sequence belongs to the phosphoglycerate kinase family. Monomer. The cofactor is Mg(2+).

The protein resides in the glycosome. It carries out the reaction (2R)-3-phosphoglycerate + ATP = (2R)-3-phospho-glyceroyl phosphate + ADP. The protein operates within carbohydrate degradation; glycolysis; pyruvate from D-glyceraldehyde 3-phosphate: step 2/5. The protein is Phosphoglycerate kinase, glycosomal of Trypanosoma brucei brucei.